A 401-amino-acid chain; its full sequence is Formate-dependent phosphoribosylglycinamide formyltransferase (401 aa).

Residues glutamate 22–leucine 23 and glutamate 82 contribute to the N(1)-(5-phospho-beta-D-ribosyl)glycinamide site. Residues arginine 115, lysine 157, serine 162–glutamine 167, glutamate 197–valine 200, and glutamate 205 contribute to the ATP site. Positions arginine 120–leucine 315 constitute an ATP-grasp domain. The Mg(2+) site is built by glutamate 274 and glutamate 286. N(1)-(5-phospho-beta-D-ribosyl)glycinamide is bound by residues aspartate 293, lysine 362, and arginine 369–arginine 370.

It belongs to the PurK/PurT family. In terms of assembly, homodimer.

The catalysed reaction is N(1)-(5-phospho-beta-D-ribosyl)glycinamide + formate + ATP = N(2)-formyl-N(1)-(5-phospho-beta-D-ribosyl)glycinamide + ADP + phosphate + H(+). The protein operates within purine metabolism; IMP biosynthesis via de novo pathway; N(2)-formyl-N(1)-(5-phospho-D-ribosyl)glycinamide from N(1)-(5-phospho-D-ribosyl)glycinamide (formate route): step 1/1. Involved in the de novo purine biosynthesis. Catalyzes the transfer of formate to 5-phospho-ribosyl-glycinamide (GAR), producing 5-phospho-ribosyl-N-formylglycinamide (FGAR). Formate is provided by PurU via hydrolysis of 10-formyl-tetrahydrofolate. The chain is Formate-dependent phosphoribosylglycinamide formyltransferase from Polaromonas naphthalenivorans (strain CJ2).